The sequence spans 66 residues: DNA-directed RNA polymerase subunit omega (66 aa).

This sequence belongs to the RNA polymerase subunit omega family. As to quaternary structure, the RNAP catalytic core consists of 2 alpha, 1 beta, 1 beta' and 1 omega subunit. When a sigma factor is associated with the core the holoenzyme is formed, which can initiate transcription.

The enzyme catalyses RNA(n) + a ribonucleoside 5'-triphosphate = RNA(n+1) + diphosphate. Promotes RNA polymerase assembly. Latches the N- and C-terminal regions of the beta' subunit thereby facilitating its interaction with the beta and alpha subunits. The protein is DNA-directed RNA polymerase subunit omega of Geobacillus kaustophilus (strain HTA426).